A 472-amino-acid chain; its full sequence is Glycogen synthase (472 aa).

Lys-16 serves as a coordination point for ADP-alpha-D-glucose.

Belongs to the glycosyltransferase 1 family. Bacterial/plant glycogen synthase subfamily.

The catalysed reaction is [(1-&gt;4)-alpha-D-glucosyl](n) + ADP-alpha-D-glucose = [(1-&gt;4)-alpha-D-glucosyl](n+1) + ADP + H(+). It functions in the pathway glycan biosynthesis; glycogen biosynthesis. Its function is as follows. Synthesizes alpha-1,4-glucan chains using ADP-glucose. In Jannaschia sp. (strain CCS1), this protein is Glycogen synthase.